The chain runs to 227 residues: Cytochrome c oxidase subunit 2 (227 aa).

The Mitochondrial intermembrane segment spans residues Met1–Ser14. A helical transmembrane segment spans residues Pro15–Thr45. Topologically, residues Leu46 to Gln59 are mitochondrial matrix. A helical transmembrane segment spans residues Glu60–Thr87. Residues Asp88–Leu227 are Mitochondrial intermembrane-facing. His161, Cys196, Glu198, Cys200, His204, and Met207 together coordinate Cu cation. Glu198 serves as a coordination point for Mg(2+).

The protein belongs to the cytochrome c oxidase subunit 2 family. In terms of assembly, component of the cytochrome c oxidase (complex IV, CIV), a multisubunit enzyme composed of 14 subunits. The complex is composed of a catalytic core of 3 subunits MT-CO1, MT-CO2 and MT-CO3, encoded in the mitochondrial DNA, and 11 supernumerary subunits COX4I1 (or COX4I2), COX5A, COX5B, COX6A1 (or COX6A2), COX6B1 (or COX6B2), COX6C, COX7A2 (or COX7A1), COX7B, COX7C, COX8A and NDUFA4, which are encoded in the nuclear genome. The complex exists as a monomer or a dimer and forms supercomplexes (SCs) in the inner mitochondrial membrane with NADH-ubiquinone oxidoreductase (complex I, CI) and ubiquinol-cytochrome c oxidoreductase (cytochrome b-c1 complex, complex III, CIII), resulting in different assemblies (supercomplex SCI(1)III(2)IV(1) and megacomplex MCI(2)III(2)IV(2)). Found in a complex with TMEM177, COA6, COX18, COX20, SCO1 and SCO2. Interacts with TMEM177 in a COX20-dependent manner. Interacts with COX20. Interacts with COX16. Cu cation serves as cofactor.

Its subcellular location is the mitochondrion inner membrane. The catalysed reaction is 4 Fe(II)-[cytochrome c] + O2 + 8 H(+)(in) = 4 Fe(III)-[cytochrome c] + 2 H2O + 4 H(+)(out). Component of the cytochrome c oxidase, the last enzyme in the mitochondrial electron transport chain which drives oxidative phosphorylation. The respiratory chain contains 3 multisubunit complexes succinate dehydrogenase (complex II, CII), ubiquinol-cytochrome c oxidoreductase (cytochrome b-c1 complex, complex III, CIII) and cytochrome c oxidase (complex IV, CIV), that cooperate to transfer electrons derived from NADH and succinate to molecular oxygen, creating an electrochemical gradient over the inner membrane that drives transmembrane transport and the ATP synthase. Cytochrome c oxidase is the component of the respiratory chain that catalyzes the reduction of oxygen to water. Electrons originating from reduced cytochrome c in the intermembrane space (IMS) are transferred via the dinuclear copper A center (CU(A)) of subunit 2 and heme A of subunit 1 to the active site in subunit 1, a binuclear center (BNC) formed by heme A3 and copper B (CU(B)). The BNC reduces molecular oxygen to 2 water molecules using 4 electrons from cytochrome c in the IMS and 4 protons from the mitochondrial matrix. The protein is Cytochrome c oxidase subunit 2 (MT-CO2) of Homo sapiens (Human).